The following is a 232-amino-acid chain: 2,3-bisphosphoglycerate-dependent phosphoglycerate mutase (232 aa).

Substrate-binding positions include 10 to 17 (RHGESIWN), 23 to 24 (TG), R62, 89 to 92 (ERHY), K100, 116 to 117 (RR), and 185 to 186 (GN). The Tele-phosphohistidine intermediate role is filled by H11. Residue E89 is the Proton donor/acceptor of the active site.

It belongs to the phosphoglycerate mutase family. BPG-dependent PGAM subfamily. As to quaternary structure, homodimer.

It catalyses the reaction (2R)-2-phosphoglycerate = (2R)-3-phosphoglycerate. The protein operates within carbohydrate degradation; glycolysis; pyruvate from D-glyceraldehyde 3-phosphate: step 3/5. Catalyzes the interconversion of 2-phosphoglycerate and 3-phosphoglycerate. This Buchnera aphidicola subsp. Baizongia pistaciae (strain Bp) protein is 2,3-bisphosphoglycerate-dependent phosphoglycerate mutase.